The sequence spans 642 residues: Mini-chromosome maintenance complex-binding protein (642 aa).

Residues 151-161 (ARVSPSTSYTP) show a composition bias toward polar residues. Positions 151–196 (ARVSPSTSYTPSRHKRSYEDDEDMDLQPSKQKEQHPGSRQAGGLGG) are disordered. A Phosphoserine modification is found at Ser-154. At Thr-160 the chain carries Phosphothreonine. 2 positions are modified to phosphoserine: Ser-167 and Ser-298.

It belongs to the MCMBP family. In terms of assembly, interacts with the MCM complex: associates with the MCM3-7 complex which lacks MCM2, while it does not interact with the MCM complex when MCM2 is present (MCM2-7 complex). Interacts with the RPA complex, when composed of all RPA1, RPA2 and RPA3 components, but not with RPA1 or RPA2 alone.

It localises to the nucleus. Associated component of the MCM complex that acts as a regulator of DNA replication. Binds to the MCM complex during late S phase and promotes the disassembly of the MCM complex from chromatin, thereby acting as a key regulator of pre-replication complex (pre-RC) unloading from replicated DNA. Can dissociate the MCM complex without addition of ATP; probably acts by destabilizing interactions of each individual subunits of the MCM complex. Required for sister chromatid cohesion. This chain is Mini-chromosome maintenance complex-binding protein (Mcmbp), found in Mus musculus (Mouse).